A 194-amino-acid polypeptide reads, in one-letter code: MIGRLRGILAYKQPPWLVIDVGGVGYELEAPMSTFYDLPDVGRDVILFTHYAQKEDSVSLYGFLREGERRLFRDVQKVTGIGAKIALAVLSGVTVDEFARLITSGDITALTRIPGIGKKTAERMVVELRDRAADFSSGAPITGQLGPDAVSEATVALQQLGYKPAEAARMAREAGAEGDEVATVIRKALQAALR.

The tract at residues 1-64 is domain I; sequence MIGRLRGILA…EDSVSLYGFL (64 aa). The domain II stretch occupies residues 65 to 140; sequence REGERRLFRD…RAADFSSGAP (76 aa). Positions 140-144 are flexible linker; it reads PITGQ. A domain III region spans residues 145–194; the sequence is LGPDAVSEATVALQQLGYKPAEAARMAREAGAEGDEVATVIRKALQAALR.

Belongs to the RuvA family. Homotetramer. Forms an RuvA(8)-RuvB(12)-Holliday junction (HJ) complex. HJ DNA is sandwiched between 2 RuvA tetramers; dsDNA enters through RuvA and exits via RuvB. An RuvB hexamer assembles on each DNA strand where it exits the tetramer. Each RuvB hexamer is contacted by two RuvA subunits (via domain III) on 2 adjacent RuvB subunits; this complex drives branch migration. In the full resolvosome a probable DNA-RuvA(4)-RuvB(12)-RuvC(2) complex forms which resolves the HJ.

The protein resides in the cytoplasm. The RuvA-RuvB-RuvC complex processes Holliday junction (HJ) DNA during genetic recombination and DNA repair, while the RuvA-RuvB complex plays an important role in the rescue of blocked DNA replication forks via replication fork reversal (RFR). RuvA specifically binds to HJ cruciform DNA, conferring on it an open structure. The RuvB hexamer acts as an ATP-dependent pump, pulling dsDNA into and through the RuvAB complex. HJ branch migration allows RuvC to scan DNA until it finds its consensus sequence, where it cleaves and resolves the cruciform DNA. In Xanthomonas campestris pv. campestris (strain 8004), this protein is Holliday junction branch migration complex subunit RuvA.